Reading from the N-terminus, the 378-residue chain is tRNA-specific 2-thiouridylase MnmA (378 aa).

ATP-binding positions include 9–16 and Met35; that span reads GVSGGVDS. Positions 94–96 are interaction with target base in tRNA; that stretch reads NPD. Catalysis depends on Cys99, which acts as the Nucleophile. Cys99 and Cys195 are joined by a disulfide. Residue Gly123 coordinates ATP. Residues 145–147 form an interaction with tRNA region; the sequence is KDQ. The Cysteine persulfide intermediate role is filled by Cys195. Positions 307-308 are interaction with tRNA; it reads RY.

It belongs to the MnmA/TRMU family.

It is found in the cytoplasm. The enzyme catalyses S-sulfanyl-L-cysteinyl-[protein] + uridine(34) in tRNA + AH2 + ATP = 2-thiouridine(34) in tRNA + L-cysteinyl-[protein] + A + AMP + diphosphate + H(+). In terms of biological role, catalyzes the 2-thiolation of uridine at the wobble position (U34) of tRNA, leading to the formation of s(2)U34. The chain is tRNA-specific 2-thiouridylase MnmA from Xanthomonas axonopodis pv. citri (strain 306).